The chain runs to 416 residues: Multifunctional CCA protein (416 aa).

ATP contacts are provided by Gly-8 and Arg-11. The CTP site is built by Gly-8 and Arg-11. Mg(2+)-binding residues include Asp-21 and Asp-23. Residues Arg-91, Arg-137, and Arg-140 each coordinate ATP. The CTP site is built by Arg-91, Arg-137, and Arg-140. The HD domain occupies 228–329; sequence TGVHTLMVLA…VKIFDKADFW (102 aa).

It belongs to the tRNA nucleotidyltransferase/poly(A) polymerase family. Bacterial CCA-adding enzyme type 1 subfamily. Monomer. Can also form homodimers and oligomers. Mg(2+) serves as cofactor. Requires Ni(2+) as cofactor.

The catalysed reaction is a tRNA precursor + 2 CTP + ATP = a tRNA with a 3' CCA end + 3 diphosphate. It carries out the reaction a tRNA with a 3' CCA end + 2 CTP + ATP = a tRNA with a 3' CCACCA end + 3 diphosphate. Functionally, catalyzes the addition and repair of the essential 3'-terminal CCA sequence in tRNAs without using a nucleic acid template. Adds these three nucleotides in the order of C, C, and A to the tRNA nucleotide-73, using CTP and ATP as substrates and producing inorganic pyrophosphate. tRNA 3'-terminal CCA addition is required both for tRNA processing and repair. Also involved in tRNA surveillance by mediating tandem CCA addition to generate a CCACCA at the 3' terminus of unstable tRNAs. While stable tRNAs receive only 3'-terminal CCA, unstable tRNAs are marked with CCACCA and rapidly degraded. The polypeptide is Multifunctional CCA protein (Shewanella baltica (strain OS155 / ATCC BAA-1091)).